The primary structure comprises 341 residues: L-threonine 3-dehydrogenase (341 aa).

C38 lines the Zn(2+) pocket. Residues T40 and H43 each act as charge relay system in the active site. Positions 63, 64, 93, 96, 99, and 107 each coordinate Zn(2+). NAD(+) is bound by residues I175, D195, R200, 262 to 264 (LGI), and 286 to 287 (IY).

It belongs to the zinc-containing alcohol dehydrogenase family. As to quaternary structure, homotetramer. Zn(2+) serves as cofactor.

The protein resides in the cytoplasm. It catalyses the reaction L-threonine + NAD(+) = (2S)-2-amino-3-oxobutanoate + NADH + H(+). The protein operates within amino-acid degradation; L-threonine degradation via oxydo-reductase pathway; glycine from L-threonine: step 1/2. Catalyzes the NAD(+)-dependent oxidation of L-threonine to 2-amino-3-ketobutyrate. This is L-threonine 3-dehydrogenase from Salmonella gallinarum (strain 287/91 / NCTC 13346).